Reading from the N-terminus, the 147-residue chain is Probable flagellum biosynthesis repressor protein FlbT (147 aa).

The protein belongs to the FlbT family.

Has a post-transcriptional repressor function in flagellum biogenesis. Associates with the 5'-UTR of fljK mRNA and promotes its degradation. The sequence is that of Probable flagellum biosynthesis repressor protein FlbT from Mesorhizobium japonicum (strain LMG 29417 / CECT 9101 / MAFF 303099) (Mesorhizobium loti (strain MAFF 303099)).